The primary structure comprises 2920 residues: Cadherin-related hmr-1 (2920 aa).

The signal sequence occupies residues 1-19 (MSWNILLILLISNLDEVLA). The Extracellular segment spans residues 20–2779 (KTLLKLPSNA…AVSKLGISSP (2760 aa)). Residues asparagine 72, asparagine 243, asparagine 253, asparagine 339, and asparagine 508 are each glycosylated (N-linked (GlcNAc...) asparagine). Cadherin domains lie at 322 to 422 (SSRS…PPSF), 425 to 530 (SPLP…PPQF), 531 to 642 (AKQE…VPTF), 643 to 747 (TRPL…SAVF), 749 to 865 (PTSQ…KPEF), 871 to 979 (YSDI…SPQF), 980 to 1093 (ERPS…APKW), 1097 to 1211 (PDCK…VPQF), 1212 to 1335 (TVDL…APSF), 1336 to 1436 (EEQK…APQF), 1438 to 1546 (QQKY…SPIF), 1548 to 1661 (ERLF…APFF), 1662 to 1772 (EKTR…APHI), and 1772 to 1874 (IHGA…EPYT). N-linked (GlcNAc...) asparagine glycosylation is found at asparagine 658, asparagine 685, asparagine 715, and asparagine 826. Asparagine 1177 carries N-linked (GlcNAc...) asparagine glycosylation. Asparagine 1417 carries an N-linked (GlcNAc...) asparagine glycan. Residue asparagine 1646 is glycosylated (N-linked (GlcNAc...) asparagine). N-linked (GlcNAc...) asparagine glycans are attached at residues asparagine 1935, asparagine 2224, and asparagine 2232. In terms of domain architecture, EGF-like 1 spans 2246-2283 (APPACQHSLCHNDGVCHNTNPGFFCECRNDGLKGARCQ). Disulfide bonds link cysteine 2250–cysteine 2261, cysteine 2255–cysteine 2270, and cysteine 2272–cysteine 2282. Residues 2284 to 2478 (GTTRSFGGNG…AFEQNSEKGC (195 aa)) enclose the Laminin G-like domain. Residues asparagine 2307 and asparagine 2332 are each glycosylated (N-linked (GlcNAc...) asparagine). Intrachain disulfides connect cysteine 2452–cysteine 2478, cysteine 2501–cysteine 2515, and cysteine 2517–cysteine 2526. In terms of domain architecture, EGF-like 2 spans 2492 to 2527 (SLNHCIHGDCFADVQGSGAMVAKCVCDPGWGGARCE). Asparagine 2623 carries an N-linked (GlcNAc...) asparagine glycan. Residues 2780-2800 (AIILILVSLALLILLVMMMVV) traverse the membrane as a helical segment. The Cytoplasmic portion of the chain corresponds to 2801-2920 (YTRRSPGAFE…VTLESIESAQ (120 aa)). Phosphoserine is present on serine 2839. The segment at 2858-2891 (IGGHPPHYPPRGMAPPKDDHELNSKIKDLETDQN) is disordered. Over residues 2873-2887 (PKDDHELNSKIKDLE) the composition is skewed to basic and acidic residues. The residue at position 2909 (serine 2909) is a Phosphoserine. Threonine 2912 is subject to Phosphothreonine. A phosphoserine mark is found at serine 2915 and serine 2918.

In terms of assembly, monomer in solution. Isoform a is a component of a core catenin-cadherin complex consisting of hmr-1, hmp-1 and hmp-2; the complex localizes to adherens junctions. Isoform a interacts with hmp-2; the interaction is direct. Isoform a interacts (via intracellular domain) with jac-1. In terms of processing, phosphorylation at T-2912 increases the binding affinity for hmp-2. Sumoylated. Sumoylation prevents accumulation at adherens junctions and decreases the binding affinity for hmp-2. As to expression, expressed in epidermal cells (at protein level). Neuron-specific.

The protein localises to the cell membrane. The protein resides in the cell junction. Its subcellular location is the adherens junction. It is found in the cell projection. It localises to the dendrite. Its function is as follows. Cadherins are calcium-dependent cell adhesion proteins. They preferentially interact with themselves in a homophilic manner in connecting cells; cadherins may thus contribute to the sorting of heterogeneous cell types. Required for adherens junction assembly and connecting adherens junctions to the cytoskeleton. Isoform a is required for cell migration during body enclosure and cell shape changes during body elongation. Required for proper localization of other junctional components, such as hmp-1, hmp-2, jac-1 and pac-1. Recruitment of pac-1 is required to establish cell polarity, independent of its role in cell adhesion. Required for primodial germ cell ingression and adherence to endodermal cells during gastrulation. In terms of biological role, isoform b is involved in axonal guidance in a subset of motor neurons. The protein is Cadherin-related hmr-1 of Caenorhabditis elegans.